The following is a 159-amino-acid chain: 3-dehydroquinate dehydratase (159 aa).

Catalysis depends on Tyr22, which acts as the Proton acceptor. Substrate is bound by residues Asn73, His79, and Asp86. His99 acts as the Proton donor in catalysis. Substrate is bound by residues 100 to 101 (IS) and Arg110.

Belongs to the type-II 3-dehydroquinase family. In terms of assembly, homododecamer.

The enzyme catalyses 3-dehydroquinate = 3-dehydroshikimate + H2O. The protein operates within metabolic intermediate biosynthesis; chorismate biosynthesis; chorismate from D-erythrose 4-phosphate and phosphoenolpyruvate: step 3/7. Its function is as follows. Catalyzes a trans-dehydration via an enolate intermediate. This chain is 3-dehydroquinate dehydratase, found in Campylobacter jejuni subsp. doylei (strain ATCC BAA-1458 / RM4099 / 269.97).